The chain runs to 449 residues: tRNA-2-methylthio-N(6)-dimethylallyladenosine synthase (449 aa).

One can recognise an MTTase N-terminal domain in the interval 2-119 (KGLFIRTYGC…LPEMIARASR (118 aa)). [4Fe-4S] cluster-binding residues include C11, C47, C82, C157, C161, and C164. Residues 143–378 (EADGPAAFVS…QALLREQQTE (236 aa)) enclose the Radical SAM core domain. In terms of domain architecture, TRAM spans 381–443 (ASQIGKTLPV…LNSLTGELVR (63 aa)).

The protein belongs to the methylthiotransferase family. MiaB subfamily. As to quaternary structure, monomer. [4Fe-4S] cluster serves as cofactor.

Its subcellular location is the cytoplasm. It carries out the reaction N(6)-dimethylallyladenosine(37) in tRNA + (sulfur carrier)-SH + AH2 + 2 S-adenosyl-L-methionine = 2-methylsulfanyl-N(6)-dimethylallyladenosine(37) in tRNA + (sulfur carrier)-H + 5'-deoxyadenosine + L-methionine + A + S-adenosyl-L-homocysteine + 2 H(+). In terms of biological role, catalyzes the methylthiolation of N6-(dimethylallyl)adenosine (i(6)A), leading to the formation of 2-methylthio-N6-(dimethylallyl)adenosine (ms(2)i(6)A) at position 37 in tRNAs that read codons beginning with uridine. This is tRNA-2-methylthio-N(6)-dimethylallyladenosine synthase from Hyphomonas neptunium (strain ATCC 15444).